A 266-amino-acid chain; its full sequence is Shikimate dehydrogenase (NADP(+)) (266 aa).

Residues 14 to 16 (SLS) and Thr-61 contribute to the shikimate site. Catalysis depends on Lys-65, which acts as the Proton acceptor. Residues Asn-85 and Asp-100 each coordinate shikimate. NADP(+)-binding positions include 124–128 (GAGGA) and Ala-210. A shikimate-binding site is contributed by Tyr-212. Gly-233 contributes to the NADP(+) binding site.

It belongs to the shikimate dehydrogenase family. Homodimer.

The enzyme catalyses shikimate + NADP(+) = 3-dehydroshikimate + NADPH + H(+). The protein operates within metabolic intermediate biosynthesis; chorismate biosynthesis; chorismate from D-erythrose 4-phosphate and phosphoenolpyruvate: step 4/7. Involved in the biosynthesis of the chorismate, which leads to the biosynthesis of aromatic amino acids. Catalyzes the reversible NADPH linked reduction of 3-dehydroshikimate (DHSA) to yield shikimate (SA). The chain is Shikimate dehydrogenase (NADP(+)) from Halobacterium salinarum (strain ATCC 29341 / DSM 671 / R1).